We begin with the raw amino-acid sequence, 210 residues long: Secreted effector protein SteA (210 aa).

It is found in the secreted. Its subcellular location is the host cytoplasm. In terms of biological role, effector proteins function to alter host cell physiology and promote bacterial survival in host tissues. Could be required for passage of bacteria from the peritoneal cavity into the spleen, for survival and replication within host cells, or for avoiding host immune response. This is Secreted effector protein SteA (steA) from Salmonella typhimurium (strain 14028s / SGSC 2262).